Consider the following 275-residue polypeptide: Mitochondrial outer membrane porin (275 aa).

This sequence belongs to the eukaryotic mitochondrial porin (TC 1.B.8.1) family.

It localises to the mitochondrion outer membrane. Forms a channel through the cell membrane that allows diffusion of small hydrophilic molecules. The channel adopts an open conformation at low or zero membrane potential and a closed conformation at potentials above 30-40 mV. The open state has a weak anion selectivity whereas the closed state is cation-selective. The sequence is that of Mitochondrial outer membrane porin (VDAC1) from Triticum aestivum (Wheat).